The sequence spans 295 residues: Nucleotide-binding protein Sare_3328 (295 aa).

19 to 26 lines the ATP pocket; sequence GVSGGGRS. 70–73 is a binding site for GTP; the sequence is DVRS.

The protein belongs to the RapZ-like family.

Functionally, displays ATPase and GTPase activities. This Salinispora arenicola (strain CNS-205) protein is Nucleotide-binding protein Sare_3328.